An 876-amino-acid chain; its full sequence is Alanine--tRNA ligase (876 aa).

The Zn(2+) site is built by His-565, His-569, Cys-667, and His-671.

Belongs to the class-II aminoacyl-tRNA synthetase family. It depends on Zn(2+) as a cofactor.

The protein resides in the cytoplasm. It catalyses the reaction tRNA(Ala) + L-alanine + ATP = L-alanyl-tRNA(Ala) + AMP + diphosphate. Its function is as follows. Catalyzes the attachment of alanine to tRNA(Ala) in a two-step reaction: alanine is first activated by ATP to form Ala-AMP and then transferred to the acceptor end of tRNA(Ala). Also edits incorrectly charged Ser-tRNA(Ala) and Gly-tRNA(Ala) via its editing domain. In Staphylococcus aureus (strain USA300), this protein is Alanine--tRNA ligase.